Reading from the N-terminus, the 341-residue chain is ATPase GET3 (341 aa).

34–41 (KGGVGKTT) is a binding site for ATP. The active site involves Asp63. ATP is bound by residues Glu245 and Asn272. Zn(2+) contacts are provided by Cys283 and Cys286.

It belongs to the arsA ATPase family. In terms of assembly, homodimer.

The protein resides in the cytoplasm. The protein localises to the endoplasmic reticulum. In terms of biological role, ATPase required for the post-translational delivery of tail-anchored (TA) proteins to the endoplasmic reticulum. Recognizes and selectively binds the transmembrane domain of TA proteins in the cytosol. This complex then targets to the endoplasmic reticulum by membrane-bound receptors, where the tail-anchored protein is released for insertion. This process is regulated by ATP binding and hydrolysis. ATP binding drives the homodimer towards the closed dimer state, facilitating recognition of newly synthesized TA membrane proteins. ATP hydrolysis is required for insertion. Subsequently, the homodimer reverts towards the open dimer state, lowering its affinity for the membrane-bound receptor, and returning it to the cytosol to initiate a new round of targeting. The sequence is that of ATPase GET3 from Ajellomyces dermatitidis (strain ER-3 / ATCC MYA-2586) (Blastomyces dermatitidis).